Here is a 269-residue protein sequence, read N- to C-terminus: Hydroxyethylthiazole kinase (269 aa).

Position 42 (M42) interacts with substrate. The ATP site is built by R118 and S164. G191 lines the substrate pocket.

Belongs to the Thz kinase family. The cofactor is Mg(2+).

The enzyme catalyses 5-(2-hydroxyethyl)-4-methylthiazole + ATP = 4-methyl-5-(2-phosphooxyethyl)-thiazole + ADP + H(+). Its pathway is cofactor biosynthesis; thiamine diphosphate biosynthesis; 4-methyl-5-(2-phosphoethyl)-thiazole from 5-(2-hydroxyethyl)-4-methylthiazole: step 1/1. Catalyzes the phosphorylation of the hydroxyl group of 4-methyl-5-beta-hydroxyethylthiazole (THZ). The sequence is that of Hydroxyethylthiazole kinase from Listeria welshimeri serovar 6b (strain ATCC 35897 / DSM 20650 / CCUG 15529 / CIP 8149 / NCTC 11857 / SLCC 5334 / V8).